We begin with the raw amino-acid sequence, 419 residues long: Glucose-1-phosphate adenylyltransferase (419 aa).

Alpha-D-glucose 1-phosphate contacts are provided by residues Tyr-106, Gly-171, 186–187 (EK), and Ser-204.

It belongs to the bacterial/plant glucose-1-phosphate adenylyltransferase family. In terms of assembly, homotetramer.

It carries out the reaction alpha-D-glucose 1-phosphate + ATP + H(+) = ADP-alpha-D-glucose + diphosphate. The protein operates within glycan biosynthesis; glycogen biosynthesis. Functionally, involved in the biosynthesis of ADP-glucose, a building block required for the elongation reactions to produce glycogen. Catalyzes the reaction between ATP and alpha-D-glucose 1-phosphate (G1P) to produce pyrophosphate and ADP-Glc. The polypeptide is Glucose-1-phosphate adenylyltransferase (Roseobacter denitrificans (strain ATCC 33942 / OCh 114) (Erythrobacter sp. (strain OCh 114))).